We begin with the raw amino-acid sequence, 827 residues long: Glycerol-3-phosphate acyltransferase (827 aa).

The short motif at 325–330 (CHRSHM) is the HXXXXD motif element.

Belongs to the GPAT/DAPAT family.

It is found in the cell inner membrane. The catalysed reaction is sn-glycerol 3-phosphate + an acyl-CoA = a 1-acyl-sn-glycero-3-phosphate + CoA. It functions in the pathway phospholipid metabolism; CDP-diacylglycerol biosynthesis; CDP-diacylglycerol from sn-glycerol 3-phosphate: step 1/3. The polypeptide is Glycerol-3-phosphate acyltransferase (Shigella sonnei (strain Ss046)).